Reading from the N-terminus, the 293-residue chain is Notch homolog 2 N-terminal-like protein C (293 aa).

4 consecutive EGF-like domains span residues 42–81 (PPRM…EYCQ), 82–120 (HRDP…EDCQ), 123–161 (TSHP…KECQ), and 162–198 (WTDA…QKCE). 17 disulfide bridges follow: Cys46–Cys59, Cys53–Cys69, Cys71–Cys80, Cys86–Cys97, Cys91–Cys108, Cys110–Cys119, Cys127–Cys139, Cys133–Cys149, Cys151–Cys160, Cys166–Cys177, Cys171–Cys186, Cys188–Cys197, Cys204–Cys216, Cys210–Cys225, Cys227–Cys236, Cys243–Cys254, and Cys248–Cys264. N-linked (GlcNAc...) asparagine glycosylation occurs at Asn64. The N-linked (GlcNAc...) asparagine glycan is linked to Asn173. The EGF-like 5; calcium-binding domain maps to 200-237 (DVNECDIPGHCQHGGTCLNLPGSYQCQCLQGFTGQYCD). Residues 239-276 (LYVPCAPSPCVNGGTCRQTGDFTFECNCLPETVRRGTE) form the EGF-like 6 domain.

Belongs to the NOTCH family. As to quaternary structure, interacts with NOTCH2. Interacts with DLL1; the interaction is direct. In terms of tissue distribution, expressed in radial glia neural stem cells during cortical development.

The protein localises to the secreted. In terms of biological role, human-specific protein that promotes neural progenitor proliferation and evolutionary expansion of the brain neocortex by regulating the Notch signaling pathway. Able to promote neural progenitor self-renewal, possibly by down-regulating neuronal differentiation genes, thereby delaying the differentiation of neuronal progenitors and leading to an overall final increase in neuronal production. Acts by enhancing the Notch signaling pathway via two different mechanisms that probably work in parallel to reach the same effect. Enhances Notch signaling pathway in a non-cell-autonomous manner via direct interaction with NOTCH2. Also promotes Notch signaling pathway in a cell-autonomous manner through inhibition of cis DLL1-NOTCH2 interactions, which promotes neuronal differentiation. The polypeptide is Notch homolog 2 N-terminal-like protein C (Homo sapiens (Human)).